The chain runs to 467 residues: Replication factor C large subunit (467 aa).

Residue 47 to 54 participates in ATP binding; the sequence is GPPGVGKT.

It belongs to the activator 1 small subunits family. RfcL subfamily. Heteromultimer composed of small subunits (RfcS) and large subunits (RfcL).

Part of the RFC clamp loader complex which loads the PCNA sliding clamp onto DNA. The sequence is that of Replication factor C large subunit from Methanothrix thermoacetophila (strain DSM 6194 / JCM 14653 / NBRC 101360 / PT) (Methanosaeta thermophila).